The following is a 78-amino-acid chain: Large ribosomal subunit protein bL28 (78 aa).

Residues M1–A21 are disordered. The segment covering T8 to A21 has biased composition (polar residues).

It belongs to the bacterial ribosomal protein bL28 family.

This is Large ribosomal subunit protein bL28 from Hahella chejuensis (strain KCTC 2396).